A 104-amino-acid polypeptide reads, in one-letter code: L-rhamnose mutarotase (104 aa).

Tyr18 serves as a coordination point for substrate. His22 functions as the Proton donor in the catalytic mechanism. Residues Tyr41 and 76–77 (WW) contribute to the substrate site.

Belongs to the rhamnose mutarotase family. Homodimer.

It is found in the cytoplasm. It carries out the reaction alpha-L-rhamnose = beta-L-rhamnose. The protein operates within carbohydrate metabolism; L-rhamnose metabolism. Involved in the anomeric conversion of L-rhamnose. This Listeria monocytogenes serotype 4b (strain F2365) protein is L-rhamnose mutarotase.